A 231-amino-acid chain; its full sequence is uncharacterized protein (231 aa).

Residues 10–30 traverse the membrane as a helical segment; that stretch reads SQNIFFIAIVIFILSSVILYH.

It is found in the membrane. This is an uncharacterized protein from Rickettsia prowazekii (strain Madrid E).